Consider the following 252-residue polypeptide: MSPVKEDRANLSPRSPRHVAIIMDGNGRWAKNKGKLRVFGHKAGVKSVRRAVSFAAKHNLDALTLYAFSSENWNRPDQEVTALMELFVRALDSEVKSLHKHNVRLSIIGDISRFSGRLQERIRRSEKLTANNDGLKLNIAANYGGRWDIIQGVRHLAEQVQKGELQPTDISEESLNSYICLHEQSQVDLVIRTGGEHRISNFLLWQIAYAELYFTDVLWPDFDENVFEGALNAFAQRERRFGGTTPIDATAS.

Aspartate 24 is an active-site residue. A Mg(2+)-binding site is contributed by aspartate 24. Substrate is bound by residues 25–28 (GNGR), tryptophan 29, arginine 37, histidine 41, and 69–71 (SSE). Asparagine 72 acts as the Proton acceptor in catalysis. Residues tryptophan 73, arginine 75, and arginine 192 each coordinate substrate. Mg(2+) is bound at residue histidine 197. 198–200 (RIS) is a binding site for substrate. Position 211 (glutamate 211) interacts with Mg(2+).

It belongs to the UPP synthase family. As to quaternary structure, homodimer. The cofactor is Mg(2+).

It catalyses the reaction 8 isopentenyl diphosphate + (2E,6E)-farnesyl diphosphate = di-trans,octa-cis-undecaprenyl diphosphate + 8 diphosphate. Functionally, catalyzes the sequential condensation of isopentenyl diphosphate (IPP) with (2E,6E)-farnesyl diphosphate (E,E-FPP) to yield (2Z,6Z,10Z,14Z,18Z,22Z,26Z,30Z,34E,38E)-undecaprenyl diphosphate (di-trans,octa-cis-UPP). UPP is the precursor of glycosyl carrier lipid in the biosynthesis of bacterial cell wall polysaccharide components such as peptidoglycan and lipopolysaccharide. This chain is Ditrans,polycis-undecaprenyl-diphosphate synthase ((2E,6E)-farnesyl-diphosphate specific), found in Yersinia pestis.